The following is a 467-amino-acid chain: MSFPQLGYPQYLSAGQAAVYGGERPGVLAAAAAAAAAAAAAGSGRPTGADLGSSSTAAVTSVLGMYASPYSAPNYSAFLPYTTDLTLFSQMGSQYELKDNPGVHPATFAAHTTPGYYPYGQFQYGDPGRPKNATRESTSTLKAWLNEHRKNPYPTKGEKIMLAIITKMTLTQVSTWFANARRRLKKENKVTWGARSKEDDNIFGSDTEGDHEKNEDDEEIDLESIDIDKIDDNDGEQSNEEEDEKLEHLRQGEKESFKKESEVMIPSSDGLKSKDSLSLGKESSDTSNTRIVSPGGQGNIQVPPHNKPKIWSLAETATSPDGALKSSPPPSQANHTSPPIQHPAFLPSHGLYTCQIGKFHNWTNGAFLTQSSLINMRSLLGVNPHHVAHHNHHHLQAHQQAPLLATNLSSLSSDKTPERTSPKHSDRENLPRTESPPQLKPSFQAVRENTLSQQEGTSRILTALPSA.

Residues 126–188 (DPGRPKNATR…NARRRLKKEN (63 aa)) constitute a DNA-binding region (homeobox; TALE-type). 3 disordered regions span residues 198 to 307 (EDDN…PHNK), 319 to 342 (SPDG…PIQH), and 410 to 467 (SLSS…LPSA). Composition is skewed to acidic residues over residues 215–225 (EDDEEIDLESI) and 233–244 (NDGEQSNEEEDE). Over residues 245–262 (KLEHLRQGEKESFKKESE) the composition is skewed to basic and acidic residues. Over residues 415–431 (KTPERTSPKHSDRENLP) the composition is skewed to basic and acidic residues. Over residues 447–460 (RENTLSQQEGTSRI) the composition is skewed to polar residues.

This sequence belongs to the TALE/IRO homeobox family. As to expression, expressed in the neural plate in overlapping patterns with other irx members, which all share an anterior border of expression. Also expressed in the mesoderm, placodes and notochord. Broadly expressed in the tailbud rhombencephalon (hindbrain). Outside the nervous system and at tailbud stages, expressed in the developing otic vesicle, branchial arches, prospective heart region and pronephros.

It is found in the nucleus. Its function is as follows. Acts partially redundantly with other irx members in neural patterning. Required for formation of the posterior forebrain, midbrain, hindbrain, and to a lesser extent, spinal cord. Acts early in neural plate development to induce expression of some but not all proneural genes, and specify a neural precursor state. Also up-regulates repressors that prevent neuronal differentiation. Patterns the neuroectoderm in both the anterior/posterior and dorsal/ventral axes. Acts primarily as a transcriptional repressor during neural development, and binds to the bmp4 promoter to repress gene expression and thus mediate down-regulation of bmp4 by wnt signaling. Controls multiple processes through bmp4-repression including neural plate development, neural crest specification and Spemann organizer development. Involved in the specification of the preplacodal field at the anterior border of the neural plate. Regulates the genetic cascade of interactions that are necessary for positioning the isthmus organizer and the formation of the midbrain-hindbrain boundary. Required during at least two stages of pronephros kidney development; during neurula stages, maintains transcription of key renal genes to define the size and identity of the pronephric anlage, probably in part through regulation of bmp-signaling. Subsequently required for proper formation of the intermediate tubule segment of the pronephros. Acts principally as a transcriptional activator during pronephros development. The sequence is that of Iroquois-class homeodomain protein irx-1 from Xenopus tropicalis (Western clawed frog).